We begin with the raw amino-acid sequence, 376 residues long: CYP enzymes assisting alcohol dehydrogenase (376 aa).

Zn(2+) is bound by residues Cys-43, Thr-45, His-64, Cys-94, Cys-97, Cys-100, Cys-108, and Cys-173. Residue Thr-45 coordinates NAD(+). Residues Thr-45 and His-64 each contribute to the substrate site. NAD(+) is bound by residues 199–204 (GLGAVG), Asp-223, Lys-228, 294–296 (LGA), Phe-320, and Lys-371.

This sequence belongs to the zinc-containing alcohol dehydrogenase family. Class-III subfamily. In terms of assembly, homodimer. It depends on Zn(2+) as a cofactor.

It participates in alkaloid biosynthesis. Functionally, may be a positive catalyzer of strictosidine production by assisting secologanin biosynthesis, thus being involved in monoterpene indole alkaloids accumulation. The polypeptide is CYP enzymes assisting alcohol dehydrogenase (Catharanthus roseus (Madagascar periwinkle)).